A 221-amino-acid chain; its full sequence is UPF0758 protein YicR (221 aa).

One can recognise an MPN domain in the interval 99 to 221 (ALLSPEMTRE…YVSFAERGWI (123 aa)). Residues His-170, His-172, and Asp-183 each contribute to the Zn(2+) site. The JAMM motif signature appears at 170–183 (HNHPSGCAEPSKAD).

The protein belongs to the UPF0758 family. YicR subfamily.

This Salmonella paratyphi A (strain ATCC 9150 / SARB42) protein is UPF0758 protein YicR.